The sequence spans 948 residues: RNA polymerase-associated protein RapA (948 aa).

Residues 164–332 (EVADRIAPRV…FARLRLLDPN (169 aa)) enclose the Helicase ATP-binding domain. 177–184 (DEVGLGKT) is an ATP binding site. A DEAH box motif is present at residues 278–281 (DEAH). The region spanning 473 to 627 (RVEWLIDQLK…TCPTGNALQH (155 aa)) is the Helicase C-terminal domain.

The protein belongs to the SNF2/RAD54 helicase family. RapA subfamily. As to quaternary structure, interacts with the RNAP. Has a higher affinity for the core RNAP than for the holoenzyme. Its ATPase activity is stimulated by binding to RNAP.

In terms of biological role, transcription regulator that activates transcription by stimulating RNA polymerase (RNAP) recycling in case of stress conditions such as supercoiled DNA or high salt concentrations. Probably acts by releasing the RNAP, when it is trapped or immobilized on tightly supercoiled DNA. Does not activate transcription on linear DNA. Probably not involved in DNA repair. In Pseudomonas fluorescens (strain Pf0-1), this protein is RNA polymerase-associated protein RapA.